We begin with the raw amino-acid sequence, 659 residues long: Cytochrome bo(3) ubiquinol oxidase subunit 1 (659 aa).

The Extracellular portion of the chain corresponds to 1-14; that stretch reads MFGKLSLNSIPYHD. Residues 15–35 traverse the membrane as a helical segment; the sequence is PIIMITCCVVILVFLVISIII. At 36 to 56 the chain is on the cytoplasmic side; it reads TIAQKWQYLWNEWCCTVDHKK. The helical transmembrane segment at 57-77 threads the bilayer; the sequence is IAKMYIFLAFIMLFRGFADAI. Residues Arg71, Asp75, and His101 each contribute to the a ubiquinone site. Topologically, residues 78–109 are extracellular; sequence MMRMQQFLVSSYHGNGTGFLPPHHYDQIFTAH. A heme b-binding site is contributed by His109. Residues 110 to 130 traverse the membrane as a helical segment; it reads GVIMIFFVAMPLVIGLMNFVV. Topologically, residues 131–148 are cytoplasmic; the sequence is PLQIGSRDVAFPFLNNLS. The chain crosses the membrane as a helical span at residues 149 to 169; that stretch reads LWLTIFSALLMNVSLGIGEFA. Topologically, residues 170 to 192 are extracellular; the sequence is QTGWLAYPPLSELQYSPGVGVDY. Trp173 is a heme b binding site. The helical transmembrane segment at 193 to 213 threads the bilayer; that stretch reads WIWSLQISGIGTTLTAINFLV. Residues 214 to 235 lie on the Cytoplasmic side of the membrane; the sequence is TIIKMRSSGMNWFKIPVFTWTS. A helical membrane pass occupies residues 236–256; sequence FCTNILIIASFPVLTVSLLLL. Topologically, residues 257–280 are extracellular; it reads TLDRYLGFHFFTNDFGGNMMMYVN. A helical transmembrane segment spans residues 281-301; it reads LIWIWGHPEVYILILPVFGIF. His287 lines the Cu(2+) pocket. Residues 287–291 constitute a cross-link (1'-histidyl-3'-tyrosine (His-Tyr)); that stretch reads HPEVY. Tyr291 serves as a coordination point for Fe(II)-heme o. The Cytoplasmic portion of the chain corresponds to 302 to 318; that stretch reads SEVVATFSSKELFGYTS. The chain crosses the membrane as a helical span at residues 319–339; it reads LIWATIVITILSFIVWLHHFF. Cu(2+)-binding residues include His336 and His337. At 340–350 the chain is on the extracellular side; sequence TMGASANVNAF. A helical transmembrane segment spans residues 351 to 371; sequence FGITTMIISIPTGVKIFNWLF. Residues 372–382 are Cytoplasmic-facing; it reads TMYRGNVRINS. The helical transmembrane segment at 383 to 403 threads the bilayer; that stretch reads IMLWTIGFLITFSIGGMAGVL. The Extracellular segment spans residues 404–416; sequence LSLPVIDFSLHNS. His414 and His422 together coordinate Fe(II)-heme o. Residues 417-437 traverse the membrane as a helical segment; the sequence is LFLVAHFHNVIIGGVVFGCFA. His424 contributes to the heme b binding site. Residues 438 to 459 are Cytoplasmic-facing; that stretch reads GITYWFPKLFGFMLSEKWGKRA. A helical transmembrane segment spans residues 460-480; the sequence is FWCWFFGFFCAFMPLYALGLM. Residues 481-499 lie on the Extracellular side of the membrane; sequence GMTRRLSQNINPQFHSMLT. Residues Arg484 and Arg485 each contribute to the heme b site. Residues 500–520 traverse the membrane as a helical segment; the sequence is IAALGTILIFIGIVFQIIQIF. Residues 521–587 lie on the Cytoplasmic side of the membrane; it reads VSIRDRNLNR…KLPILYTSFH (67 aa). The helical transmembrane segment at 588-608 threads the bilayer; the sequence is MPKNTKFGFLIGFFAFLLGFS. Residue Ala609 is a topological domain, extracellular. A helical transmembrane segment spans residues 610-630; sequence VWYIFWLFFISFFVIIYLLVI. Over 631 to 659 the chain is Cytoplasmic; that stretch reads KSLDTNCDYIISIEEIKEIEKCINIKKMD.

Belongs to the heme-copper respiratory oxidase family. As to quaternary structure, the cytochrome bo(3) ubiquinol oxidase complex is a heterooctamer of two A chains, two B chains, two C chains and two D chains. Cu(2+) is required as a cofactor. The cofactor is heme b. It depends on Fe(II)-heme o as a cofactor.

Its subcellular location is the cell membrane. It carries out the reaction 2 a ubiquinol + O2 + n H(+)(in) = 2 a ubiquinone + 2 H2O + n H(+)(out). In terms of biological role, cytochrome bo(3) ubiquinol oxidase is the terminal enzyme in the aerobic respiratory chain. Catalyzes the four-electron reduction of O2 to water, using a ubiquinol as a membrane soluble electron donor for molecular oxygen reduction. Has proton pump activity across the membrane in addition to electron transfer, pumping 2 protons/electron and generating a proton motive force. All the redox centers of this enzyme complex are located within the largest subunit, subunit I. Protons are probably pumped via D- and K- channels found in this subunit. In Buchnera aphidicola subsp. Baizongia pistaciae (strain Bp), this protein is Cytochrome bo(3) ubiquinol oxidase subunit 1 (cyoB).